The chain runs to 132 residues: Large ribosomal subunit protein bL17 (132 aa).

This sequence belongs to the bacterial ribosomal protein bL17 family. Part of the 50S ribosomal subunit. Contacts protein L32.

This chain is Large ribosomal subunit protein bL17, found in Anaplasma phagocytophilum (strain HZ).